We begin with the raw amino-acid sequence, 183 residues long: ATP synthase subunit delta, chloroplastic (183 aa).

It belongs to the ATPase delta chain family. As to quaternary structure, F-type ATPases have 2 components, F(1) - the catalytic core - and F(0) - the membrane proton channel. F(1) has five subunits: alpha(3), beta(3), gamma(1), delta(1), epsilon(1). CF(0) has four main subunits: a(1), b(1), b'(1) and c(10-14). The alpha and beta chains form an alternating ring which encloses part of the gamma chain. F(1) is attached to F(0) by a central stalk formed by the gamma and epsilon chains, while a peripheral stalk is formed by the delta, b and b' chains.

The protein resides in the plastid. It localises to the chloroplast thylakoid membrane. In terms of biological role, f(1)F(0) ATP synthase produces ATP from ADP in the presence of a proton or sodium gradient. F-type ATPases consist of two structural domains, F(1) containing the extramembraneous catalytic core and F(0) containing the membrane proton channel, linked together by a central stalk and a peripheral stalk. During catalysis, ATP synthesis in the catalytic domain of F(1) is coupled via a rotary mechanism of the central stalk subunits to proton translocation. This protein is part of the stalk that links CF(0) to CF(1). It either transmits conformational changes from CF(0) to CF(1) or is implicated in proton conduction. In Cyanidium caldarium (Red alga), this protein is ATP synthase subunit delta, chloroplastic.